A 246-amino-acid polypeptide reads, in one-letter code: Probable transcriptional regulatory protein YebC (246 aa).

The interval 1-20 is disordered; that stretch reads MAGHSKWANTRHRKAAQDAK.

This sequence belongs to the TACO1 family.

The protein localises to the cytoplasm. In Shigella boydii serotype 4 (strain Sb227), this protein is Probable transcriptional regulatory protein YebC.